The sequence spans 495 residues: Cytochrome P450 monooxygenase cnsC (495 aa).

Heme is bound at residue cysteine 434.

This sequence belongs to the cytochrome P450 family. Heme serves as cofactor.

The protein operates within alkaloid biosynthesis. Cytochrome P450 monooxygenase; part of the gene cluster that mediates the biosynthesis of communesins, a prominent class of indole alkaloids with great potential as pharmaceuticals. Communesins are biosynthesized by the coupling of tryptamine and aurantioclavine, two building blocks derived from L-tryptophan. The L-tryptophan decarboxylase cnsB converts L-tryptophan to tryptamine, whereas the tryptophan dimethylallyltransferase cnsF converts L-tryptophan to 4-dimethylallyl tryptophan which is further transformed to aurantioclavine by the aurantioclavine synthase cnsA, probably aided by the catalase cnsD. The cytochrome P450 monooxygenase cnsC catalyzes the heterodimeric coupling between the two different indole moieties, tryptamine and aurantioclavine, to construct vicinal quaternary stereocenters and yield the heptacyclic communesin scaffold. The O-methyltransferase cnsE then methylates the communesin scaffold to produce communesin K, the simplest characterized communesin that contains the heptacyclic core. The dioxygenase cnsJ converts communesin K into communesin I. Acylation to introduce the hexadienyl group at position N16 of communesin I by the acyltransferase cnsK leads to the production of communesin B. The hexadienyl group is produced by the highly reducing polyketide synthase cnsI, before being hydrolytically removed from cnsI by the serine hydrolase cnsH, converted into hexadienyl-CoA by the CoA ligase cnsG, and then transferred to communesin I by cnsK. Surprisingly, cnsK may also be a promiscuous acyltransferase that can tolerate a range of acyl groups, including acetyl-, propionyl-, and butyryl-CoA, which lead to communesins A, G and H respectively. The roles of the alpha-ketoglutarate-dependent dioxygenases cnsM and cnsP have still to be determined. The protein is Cytochrome P450 monooxygenase cnsC of Penicillium expansum (Blue mold rot fungus).